Reading from the N-terminus, the 456-residue chain is Outer membrane efflux protein BepC (456 aa).

Positions 1–28 are cleaved as a signal peptide; sequence MRYTVFKACKELVAAAVLLSGTVLTGQA. Residues 312–341 adopt a coiled-coil conformation; that stretch reads RTSAQIRQSKEQLGQARIEVDVVQDKVRQA.

The protein belongs to the outer membrane factor (OMF) (TC 1.B.17) family. As to quaternary structure, probably part of a tripartite efflux pump, which is composed of an outer membrane efflux protein, an inner membrane protein and a protein that expands the periplasmic space. Could form a tripartite pump with BepD and BepE or with BepF and BepG.

It is found in the cell outer membrane. Functionally, involved in the efflux of toxic and relatively hydrophobic compounds. Influences survival inside the host. The chain is Outer membrane efflux protein BepC (bepC) from Brucella suis biovar 1 (strain 1330).